The sequence spans 552 residues: Lysine--tRNA ligase (552 aa).

The short motif at 72 to 80 (PSGLPHLGT) is the 'HIGH' region element. The short motif at 320 to 324 (KISKS) is the 'KMSKS' region element. Residue Lys323 coordinates ATP.

This sequence belongs to the class-I aminoacyl-tRNA synthetase family.

Its subcellular location is the cytoplasm. It catalyses the reaction tRNA(Lys) + L-lysine + ATP = L-lysyl-tRNA(Lys) + AMP + diphosphate. The polypeptide is Lysine--tRNA ligase (Caulobacter vibrioides (strain ATCC 19089 / CIP 103742 / CB 15) (Caulobacter crescentus)).